The following is a 373-amino-acid chain: ATP synthase gamma chain 1, chloroplastic (373 aa).

The transit peptide at 1-50 (MACSNLTTMWVSSKPSLSADSSSLSFRSVLKCPTNTSSPPSRASSVSPLQ) directs the protein to the chloroplast. Cys-139 is an active-site residue. Cysteines 249 and 255 form a disulfide. Position 347 is a phosphoserine (Ser-347).

Belongs to the ATPase gamma chain family. F-type ATPases have 2 components, CF(1) - the catalytic core - and CF(0) - the membrane proton channel. CF(1) has five subunits: alpha(3), beta(3), gamma(1), delta(1), epsilon(1). CF(0) has four main subunits: a, b, b' and c. Interacts with PAB.

Its subcellular location is the plastid. It is found in the chloroplast thylakoid membrane. In terms of biological role, produces ATP from ADP in the presence of a proton gradient across the membrane. The gamma chain is believed to be important in regulating ATPase activity and the flow of protons through the CF(0) complex. This chain is ATP synthase gamma chain 1, chloroplastic (ATPC1), found in Arabidopsis thaliana (Mouse-ear cress).